The primary structure comprises 152 residues: Aspartate carbamoyltransferase regulatory chain (152 aa).

4 residues coordinate Zn(2+): Cys107, Cys112, Cys136, and Cys139.

It belongs to the PyrI family. Contains catalytic and regulatory chains. Zn(2+) is required as a cofactor.

Functionally, involved in allosteric regulation of aspartate carbamoyltransferase. The chain is Aspartate carbamoyltransferase regulatory chain from Chromobacterium violaceum (strain ATCC 12472 / DSM 30191 / JCM 1249 / CCUG 213 / NBRC 12614 / NCIMB 9131 / NCTC 9757 / MK).